The sequence spans 227 residues: Cytochrome c oxidase subunit 2 (227 aa).

Residues 1-14 (MAYPFQLGLQDATS) are Mitochondrial intermembrane-facing. The chain crosses the membrane as a helical span at residues 15–45 (PIMEELTNFHDHTLMIVFLISSLVLYIISLM). Topologically, residues 46 to 59 (LTTKLTHTSTMDAQ) are mitochondrial matrix. Residues 60-87 (EVETIWTILPAAILILIALPSLRILYMM) traverse the membrane as a helical segment. The Mitochondrial intermembrane segment spans residues 88–227 (DEINNPVLTV…YFENWSTSMI (140 aa)). The Cu cation site is built by His161, Cys196, Glu198, Cys200, His204, and Met207. Glu198 is a binding site for Mg(2+). Tyr218 is modified (phosphotyrosine).

Belongs to the cytochrome c oxidase subunit 2 family. As to quaternary structure, component of the cytochrome c oxidase (complex IV, CIV), a multisubunit enzyme composed of 14 subunits. The complex is composed of a catalytic core of 3 subunits MT-CO1, MT-CO2 and MT-CO3, encoded in the mitochondrial DNA, and 11 supernumerary subunits COX4I, COX5A, COX5B, COX6A, COX6B, COX6C, COX7A, COX7B, COX7C, COX8 and NDUFA4, which are encoded in the nuclear genome. The complex exists as a monomer or a dimer and forms supercomplexes (SCs) in the inner mitochondrial membrane with NADH-ubiquinone oxidoreductase (complex I, CI) and ubiquinol-cytochrome c oxidoreductase (cytochrome b-c1 complex, complex III, CIII), resulting in different assemblies (supercomplex SCI(1)III(2)IV(1) and megacomplex MCI(2)III(2)IV(2)). Found in a complex with TMEM177, COA6, COX18, COX20, SCO1 and SCO2. Interacts with TMEM177 in a COX20-dependent manner. Interacts with COX20. Interacts with COX16. It depends on Cu cation as a cofactor.

Its subcellular location is the mitochondrion inner membrane. It catalyses the reaction 4 Fe(II)-[cytochrome c] + O2 + 8 H(+)(in) = 4 Fe(III)-[cytochrome c] + 2 H2O + 4 H(+)(out). Functionally, component of the cytochrome c oxidase, the last enzyme in the mitochondrial electron transport chain which drives oxidative phosphorylation. The respiratory chain contains 3 multisubunit complexes succinate dehydrogenase (complex II, CII), ubiquinol-cytochrome c oxidoreductase (cytochrome b-c1 complex, complex III, CIII) and cytochrome c oxidase (complex IV, CIV), that cooperate to transfer electrons derived from NADH and succinate to molecular oxygen, creating an electrochemical gradient over the inner membrane that drives transmembrane transport and the ATP synthase. Cytochrome c oxidase is the component of the respiratory chain that catalyzes the reduction of oxygen to water. Electrons originating from reduced cytochrome c in the intermembrane space (IMS) are transferred via the dinuclear copper A center (CU(A)) of subunit 2 and heme A of subunit 1 to the active site in subunit 1, a binuclear center (BNC) formed by heme A3 and copper B (CU(B)). The BNC reduces molecular oxygen to 2 water molecules using 4 electrons from cytochrome c in the IMS and 4 protons from the mitochondrial matrix. The sequence is that of Cytochrome c oxidase subunit 2 (MT-CO2) from Arvicanthis somalicus (Neumann's grass rat).